Reading from the N-terminus, the 152-residue chain is Protein ripply3 (152 aa).

Basic and acidic residues predominate over residues 1–24; sequence MRPEAAGVREARGRLCHCPGDDPG. Disordered stretches follow at residues 1–76 and 113–152; these read MRPE…GAFG and FYND…ERAE. The short motif at 40 to 43 is the WRPW motif element; it reads WRPW. The interval 79–114 is ripply homology domain; that stretch reads HPVRLYLPVSKRQEYLQSSGEKVLASFPVQATIHFY. Residues 116-130 are compositionally biased toward acidic residues; that stretch reads DDSESGSEEEQEEEA. Over residues 140–152 the composition is skewed to basic and acidic residues; that stretch reads AEVRDSAQEERAE.

This sequence belongs to the ripply family. As to quaternary structure, interacts with TBX1.

Its subcellular location is the nucleus. Acts as a transcriptional corepressor. Negative regulator of the transcriptional activity of TBX1. Plays a role in the development of the pharyngeal apparatus and derivatives. The sequence is that of Protein ripply3 (Ripply3) from Mus musculus (Mouse).